We begin with the raw amino-acid sequence, 231 residues long: UPF0173 metal-dependent hydrolase AF_1265 (231 aa).

This sequence belongs to the UPF0173 family.

The chain is UPF0173 metal-dependent hydrolase AF_1265 from Archaeoglobus fulgidus (strain ATCC 49558 / DSM 4304 / JCM 9628 / NBRC 100126 / VC-16).